The following is a 160-amino-acid chain: 6,7-dimethyl-8-ribityllumazine synthase (160 aa).

Residues W27, 59–61 (AIE), and 81–83 (VVI) each bind 5-amino-6-(D-ribitylamino)uracil. 86–87 (DT) serves as a coordination point for (2S)-2-hydroxy-3-oxobutyl phosphate. The active-site Proton donor is the H89. Residue N114 participates in 5-amino-6-(D-ribitylamino)uracil binding. Residue R128 coordinates (2S)-2-hydroxy-3-oxobutyl phosphate.

Belongs to the DMRL synthase family. In terms of assembly, homopentamer.

It catalyses the reaction (2S)-2-hydroxy-3-oxobutyl phosphate + 5-amino-6-(D-ribitylamino)uracil = 6,7-dimethyl-8-(1-D-ribityl)lumazine + phosphate + 2 H2O + H(+). Its pathway is cofactor biosynthesis; riboflavin biosynthesis; riboflavin from 2-hydroxy-3-oxobutyl phosphate and 5-amino-6-(D-ribitylamino)uracil: step 1/2. In terms of biological role, catalyzes the formation of 6,7-dimethyl-8-ribityllumazine by condensation of 5-amino-6-(D-ribitylamino)uracil with 3,4-dihydroxy-2-butanone 4-phosphate. This is the penultimate step in the biosynthesis of riboflavin. This Mycobacterium leprae (strain Br4923) protein is 6,7-dimethyl-8-ribityllumazine synthase.